A 199-amino-acid chain; its full sequence is Putative HMP/thiamine permease protein YkoE (199 aa).

A run of 6 helical transmembrane segments spans residues 9-29 (IVIM…FTHF), 40-60 (IAYE…AYMI), 63-83 (PGAA…LGNP), 85-105 (GPMV…VFLA), 114-134 (PVLM…DLFV), and 143-163 (GYLL…AGLL).

The complex is composed of two ATP-binding proteins (YkoD), two transmembrane proteins (YkoC and YkoE) and a solute-binding protein (YkoF).

Its subcellular location is the cell membrane. Its function is as follows. Part of the ABC transporter complex YkoCDEF that could transport hydroxymethylpyrimidine (HMP) and/or thiamine. Could also transport other HMP-containing products. Probably responsible for the translocation of the substrate across the membrane. This chain is Putative HMP/thiamine permease protein YkoE (ykoE), found in Bacillus subtilis (strain 168).